Consider the following 238-residue polypeptide: Bacterial microcompartment shell protein PduB (238 aa).

2 BMC circularly permuted domains span residues 14–125 (FVGA…VYNA) and 126–225 (KAGH…LSQF). C158 and C197 are joined by a disulfide.

The protein belongs to the EutL/PduB family. As to quaternary structure, homotrimerizes to form a pseudohexamer with a central pore 7.5 Angstroms wide and 22 Angstroms long; the pore channel in the crystal binds up to 4 glycerol molecules. A disulfide bond forms in the pore, it is not clear if this is an artifact. The trimers pack into an array.

Its subcellular location is the bacterial microcompartment. Its pathway is polyol metabolism; 1,2-propanediol degradation. One of the major shell proteins of the bacterial microcompartment (BMC) dedicated to 1,2-propanediol (1,2-PD) degradation. Probably involved in a propanediol fermentation/reuterin formation pathway. This is Bacterial microcompartment shell protein PduB from Limosilactobacillus reuteri (strain DSM 20016) (Lactobacillus reuteri).